The chain runs to 398 residues: Tryptophan synthase beta chain (398 aa).

N6-(pyridoxal phosphate)lysine is present on lysine 88.

Belongs to the TrpB family. Tetramer of two alpha and two beta chains. Requires pyridoxal 5'-phosphate as cofactor.

The enzyme catalyses (1S,2R)-1-C-(indol-3-yl)glycerol 3-phosphate + L-serine = D-glyceraldehyde 3-phosphate + L-tryptophan + H2O. The protein operates within amino-acid biosynthesis; L-tryptophan biosynthesis; L-tryptophan from chorismate: step 5/5. Its function is as follows. The beta subunit is responsible for the synthesis of L-tryptophan from indole and L-serine. The protein is Tryptophan synthase beta chain of Mannheimia succiniciproducens (strain KCTC 0769BP / MBEL55E).